The following is a 401-amino-acid chain: Mu-type opioid receptor (401 aa).

The Extracellular segment spans residues 1–69 (MDSGAVPTNA…CPSAGSPSMI (69 aa)). N-linked (GlcNAc...) asparagine glycosylation is found at Asn-9, Asn-12, Asn-34, Asn-41, and Asn-49. Residues 70 to 94 (TAIIIMALYSIVCVVGLFGNFLVMY) form a helical membrane-spanning segment. Residues 95-107 (VIVRYTKMKTATN) lie on the Cytoplasmic side of the membrane. Residues 108–132 (IYIFNLALADALATSTLPFQSVNYL) traverse the membrane as a helical segment. The Extracellular segment spans residues 133 to 143 (MGTWPFGTILC). A disulfide bond links Cys-143 and Cys-220. The chain crosses the membrane as a helical span at residues 144–166 (KIVISIDYYNMFTSIFTLCTMSV). Topologically, residues 167 to 186 (DRYIAVCHPVKALDLRTPRN) are cytoplasmic. Tyr-169 carries the phosphotyrosine modification. The chain crosses the membrane as a helical span at residues 187-208 (AKIINICNWILSSAIGLPVMFM). The Extracellular portion of the chain corresponds to 209–231 (ATTKYRQGSIDCTLTFSHPTWYW). A helical transmembrane segment spans residues 232–256 (ENLLKICVFIFAFIMPILIITVCYG). At 257–280 (LMILRLKSVRMLSGSKEKDRNLRR) the chain is on the cytoplasmic side. A helical membrane pass occupies residues 281–307 (ITRMVLVVVAVFIVCWTPIHIYVIIKA). Topologically, residues 308-315 (LITIPETT) are extracellular. The chain crosses the membrane as a helical span at residues 316-339 (FQTVSWHFCIALGYTNSCLNPVLY). Residues 335 to 339 (NPVLY) carry the NPxxY; plays a role in stabilizing the activated conformation of the receptor motif. The Cytoplasmic segment spans residues 340–401 (AFLDENFKRC…NLEAETTPLP (62 aa)). Cys-354 carries the S-palmitoyl cysteine lipid modification. Residues 365-389 (NSTRIRQNTRDHPSTANTVDRTNHQ) are disordered. Residue Ser-366 is modified to Phosphoserine. Phosphothreonine is present on Thr-373. A Phosphoserine modification is found at Ser-378. Thr-397 carries the post-translational modification Phosphothreonine.

It belongs to the G-protein coupled receptor 1 family. As to quaternary structure, forms homooligomers and heterooligomers with other GPCRs, such as OPRD1, OPRK1, OPRL1, NPFFR2, ADRA2A, SSTR2, CNR1 and CCR5 (probably in dimeric forms). Interacts with heterotrimeric G proteins; interaction with a heterotrimeric complex containing GNAI1, GNB1 and GNG2 stabilizes the active conformation of the receptor and increases its affinity for endomorphin-2, the synthetic opioid peptide DAMGO and for morphinan agonists. Interacts with PPL; the interaction disrupts agonist-mediated G-protein activation. Interacts (via C-terminus) with DNAJB4 (via C-terminus). Interacts with calmodulin; the interaction inhibits the constitutive activity of OPRM1; it abolishes basal and attenuates agonist-stimulated G-protein coupling. Interacts with FLNA, PLD2, RANBP9 and WLS and GPM6A. Interacts with RTP4. Interacts with SYP and GNAS. Interacts with RGS9, RGS17, RGS20, RGS4, PPP1R9B and HINT1. Phosphorylated. Differentially phosphorylated in basal and agonist-induced conditions. Agonist-mediated phosphorylation modulates receptor internalization. Phosphorylated by GRK2 in a agonist-dependent manner. Phosphorylation at Tyr-169 requires receptor activation, is dependent on non-receptor protein tyrosine kinase Src and results in a decrease in agonist efficacy by reducing G-protein coupling efficiency. Phosphorylated on tyrosine residues; the phosphorylation is involved in agonist-induced G-protein-independent receptor down-regulation. Phosphorylation at Ser-378 is involved in G-protein-dependent but not beta-arrestin-dependent activation of the ERK pathway. In terms of processing, ubiquitinated. A basal ubiquitination seems not to be related to degradation. Ubiquitination is increased upon formation of OPRM1:OPRD1 oligomers leading to proteasomal degradation; the ubiquitination is diminished by RTP4.

It is found in the cell membrane. It localises to the cell projection. The protein resides in the axon. Its subcellular location is the perikaryon. The protein localises to the dendrite. It is found in the endosome. In terms of biological role, receptor for endogenous opioids such as beta-endorphin and endomorphin. Receptor for natural and synthetic opioids including morphine, heroin, DAMGO, fentanyl, etorphine, buprenorphin and methadone. Also activated by enkephalin peptides, such as Met-enkephalin or Met-enkephalin-Arg-Phe, with higher affinity for Met-enkephalin-Arg-Phe. Agonist binding to the receptor induces coupling to an inactive GDP-bound heterotrimeric G-protein complex and subsequent exchange of GDP for GTP in the G-protein alpha subunit leading to dissociation of the G-protein complex with the free GTP-bound G-protein alpha and the G-protein beta-gamma dimer activating downstream cellular effectors. The agonist- and cell type-specific activity is predominantly coupled to pertussis toxin-sensitive G(i) and G(o) G alpha proteins, GNAI1, GNAI2, GNAI3 and GNAO1, and to a lesser extent to pertussis toxin-insensitive G alpha proteins GNAZ and GNA15. They mediate an array of downstream cellular responses, including inhibition of adenylate cyclase activity and both N-type and L-type calcium channels, activation of inward rectifying potassium channels, mitogen-activated protein kinase (MAPK), phospholipase C (PLC), phosphoinositide/protein kinase (PKC), phosphoinositide 3-kinase (PI3K) and regulation of NF-kappa-B. Also couples to adenylate cyclase stimulatory G alpha proteins. The selective temporal coupling to G-proteins and subsequent signaling can be regulated by RGSZ proteins, such as RGS9, RGS17 and RGS4. Phosphorylation by members of the GPRK subfamily of Ser/Thr protein kinases and association with beta-arrestins is involved in short-term receptor desensitization. Beta-arrestins associate with the GPRK-phosphorylated receptor and uncouple it from the G-protein thus terminating signal transduction. The phosphorylated receptor is internalized through endocytosis via clathrin-coated pits which involves beta-arrestins. The activation of the ERK pathway occurs either in a G-protein-dependent or a beta-arrestin-dependent manner and is regulated by agonist-specific receptor phosphorylation. Acts as a class A G-protein coupled receptor (GPCR) which dissociates from beta-arrestin at or near the plasma membrane and undergoes rapid recycling. Receptor down-regulation pathways are varying with the agonist and occur dependent or independent of G-protein coupling. Endogenous ligands induce rapid desensitization, endocytosis and recycling. Heterooligomerization with other GPCRs can modulate agonist binding, signaling and trafficking properties. Involved in neurogenesis. In Bos taurus (Bovine), this protein is Mu-type opioid receptor (OPRM1).